The following is a 336-amino-acid chain: Dihydroorotate dehydrogenase (quinone) (336 aa).

FMN-binding positions include 62–66 (AGLDK) and T86. K66 is a substrate binding site. 111–115 (NRMGF) is a substrate binding site. Positions 139 and 172 each coordinate FMN. N172 is a binding site for substrate. S175 serves as the catalytic Nucleophile. A substrate-binding site is contributed by N177. K217 and T245 together coordinate FMN. Residue 246 to 247 (NT) participates in substrate binding. FMN is bound by residues G268, G297, and 318–319 (YS).

This sequence belongs to the dihydroorotate dehydrogenase family. Type 2 subfamily. Monomer. Requires FMN as cofactor.

Its subcellular location is the cell membrane. The catalysed reaction is (S)-dihydroorotate + a quinone = orotate + a quinol. The protein operates within pyrimidine metabolism; UMP biosynthesis via de novo pathway; orotate from (S)-dihydroorotate (quinone route): step 1/1. Catalyzes the conversion of dihydroorotate to orotate with quinone as electron acceptor. This Escherichia coli O17:K52:H18 (strain UMN026 / ExPEC) protein is Dihydroorotate dehydrogenase (quinone).